We begin with the raw amino-acid sequence, 189 residues long: Elongation factor P (189 aa).

This sequence belongs to the elongation factor P family.

The protein resides in the cytoplasm. It participates in protein biosynthesis; polypeptide chain elongation. In terms of biological role, involved in peptide bond synthesis. Stimulates efficient translation and peptide-bond synthesis on native or reconstituted 70S ribosomes in vitro. Probably functions indirectly by altering the affinity of the ribosome for aminoacyl-tRNA, thus increasing their reactivity as acceptors for peptidyl transferase. This is Elongation factor P from Rhizobium etli (strain CIAT 652).